The following is an 80-amino-acid chain: Large ribosomal subunit protein bL31B (80 aa).

The protein belongs to the bacterial ribosomal protein bL31 family. Type B subfamily. As to quaternary structure, part of the 50S ribosomal subunit.

This chain is Large ribosomal subunit protein bL31B, found in Xylella fastidiosa (strain 9a5c).